A 150-amino-acid polypeptide reads, in one-letter code: 3-dehydroquinate dehydratase (150 aa).

The Proton acceptor role is filled by Tyr26. Residues Asn77, His83, and Asp90 each contribute to the substrate site. His103 (proton donor) is an active-site residue. Substrate-binding positions include 104-105 (LS) and Arg114.

This sequence belongs to the type-II 3-dehydroquinase family. As to quaternary structure, homododecamer.

The catalysed reaction is 3-dehydroquinate = 3-dehydroshikimate + H2O. The protein operates within metabolic intermediate biosynthesis; chorismate biosynthesis; chorismate from D-erythrose 4-phosphate and phosphoenolpyruvate: step 3/7. In terms of biological role, catalyzes a trans-dehydration via an enolate intermediate. This chain is 3-dehydroquinate dehydratase, found in Erwinia tasmaniensis (strain DSM 17950 / CFBP 7177 / CIP 109463 / NCPPB 4357 / Et1/99).